The primary structure comprises 293 residues: Dioxygenase cdmA (293 aa).

The Fe cation site is built by histidine 135, aspartate 137, and histidine 212.

This sequence belongs to the PhyH family. As to quaternary structure, homodimer. It depends on Fe cation as a cofactor.

It carries out the reaction chrodrimanin C + 2-oxoglutarate + O2 = verruculide A + succinate + CO2 + H2O. It catalyses the reaction chrodrimanin H + 2-oxoglutarate + O2 = chrodrimanin E + succinate + CO2 + H2O. The protein operates within secondary metabolite biosynthesis; terpenoid biosynthesis. In terms of biological role, dioxygenase; part of the gene cluster that mediates the biosynthesis of chrodrimanin B, a meroterpenoid that acts as a potent blocker of insect GABA-gated chloride channels. The first step of the pathway is the biosynthesis of 6-hydroxymellein by the polyketide synthase cdmE. The prenyltransferase cdmH acts as a 6-hydroxymellein 5-farnesyltransferase and produces the hydrophobic metabolite verruculide C. The FAD-dependent monooxygenase cdmI further converts verruculide C into verruculide B. The terpene cyclase cdmG then produced the pentacyclic molecule 3-hydroxypentacecilide A, the backbone structure of chrodrimanin B, via folding the farnesyl moiety of the substrate into the chair-boat conformation. The short-chain dehydrogenase/reductase cdmF functions as the 3-OH dehydrogenase that oxidizes the C-3 hydroxyl group of 3-hydroxypentacecilide A and produces chrodrimanin C, the dehydrogenated product of 3-hydroxypentacecilide A. The cytochrome P450 monooxygenase cdmJ then accepts both 3-hydroxypentacecilide A and chrodrimanin C and functions as a C-7-beta-hydroxylase to produce respectively chrodrimanin H and chrodrimanin F. The dioxygenase cdmA accepts chrodrimanin H to afford chrodrimanin E, which is further transformed to chrodrimanin A by the dioxygenase cdmD. CdmA can also accept chrodrimanin C as substrate to convert it into verruculide A, which is further converted into chrodrimanin T by cdmD. The last step of the biosynthesis is proposed to be performed by the acetyltransferase cdmC which acetylates chrodrimanin A to yield chrodrimanin B. The pathway may also lead to the production of additional shunt products, including chrodrimanins T and U. This chain is Dioxygenase cdmA, found in Talaromyces verruculosus (Penicillium verruculosum).